The primary structure comprises 339 residues: Dihydroorotate dehydrogenase (quinone) (339 aa).

Residues 64-68 (AGADK) and Thr-88 contribute to the FMN site. Lys-68 lines the substrate pocket. 113–117 (NRNGF) serves as a coordination point for substrate. Residues Asn-141 and Asn-174 each contribute to the FMN site. Asn-174 is a binding site for substrate. Ser-177 acts as the Nucleophile in catalysis. Asn-179 lines the substrate pocket. Residues Lys-219 and Thr-247 each coordinate FMN. Position 248-249 (248-249 (NT)) interacts with substrate. Residues Gly-270, Gly-299, and 320–321 (YS) each bind FMN.

This sequence belongs to the dihydroorotate dehydrogenase family. Type 2 subfamily. In terms of assembly, monomer. FMN is required as a cofactor.

It localises to the cell membrane. The catalysed reaction is (S)-dihydroorotate + a quinone = orotate + a quinol. The protein operates within pyrimidine metabolism; UMP biosynthesis via de novo pathway; orotate from (S)-dihydroorotate (quinone route): step 1/1. Its function is as follows. Catalyzes the conversion of dihydroorotate to orotate with quinone as electron acceptor. This is Dihydroorotate dehydrogenase (quinone) from Haemophilus influenzae (strain PittGG).